The following is a 1468-amino-acid chain: DNA polymerase III PolC-type (1468 aa).

Positions 197–217 are disordered; sequence QKSLEDSAPPSEEVTPTQNYD. In terms of domain architecture, Exonuclease spans 430–586; that stretch reads YVVFDVETTG…YDAEATGRLL (157 aa).

The protein belongs to the DNA polymerase type-C family. PolC subfamily.

The protein localises to the cytoplasm. It catalyses the reaction DNA(n) + a 2'-deoxyribonucleoside 5'-triphosphate = DNA(n+1) + diphosphate. In terms of biological role, required for replicative DNA synthesis. This DNA polymerase also exhibits 3' to 5' exonuclease activity. The polypeptide is DNA polymerase III PolC-type (Streptococcus agalactiae serotype III (strain NEM316)).